An 884-amino-acid polypeptide reads, in one-letter code: Probable disease resistance protein At1g12290 (884 aa).

Residues 26 to 66 are a coiled coil; the sequence is LYYIQNIKENLTSLEEAMEDLKALRDDLLRKVQTAEEGGLQ. In terms of domain architecture, NB-ARC spans 139–443; the sequence is AHPATRAVGE…CEGFIDGDEN (305 aa). 182–189 serves as a coordination point for ATP; the sequence is GMGGVGKT. LRR repeat units follow at residues 519–540, 541–563, 566–588, 590–612, 613–635, and 644–664; these read VVSR…PECP, KLTT…FFRS, RLVV…ISEL, SLRY…LKLK, KLMH…DHLS, and NLRM…ENLE.

It belongs to the disease resistance NB-LRR family.

Probable disease resistance protein. This Arabidopsis thaliana (Mouse-ear cress) protein is Probable disease resistance protein At1g12290.